The chain runs to 152 residues: Protein CHLOROPLAST VESICULATION (152 aa).

The transit peptide at 1–22 (MAGRISCCLNLPPLDSNSAQSL) directs the protein to the chloroplast. The helical transmembrane segment at 48–65 (CSFVLGVAATVVIGGIQI) threads the bilayer. Residues 92 to 152 (RWSDKRTCPP…RVNRGGCFSV (61 aa)) form an important for chloroplast destabilization and the formation of CV-containing vesicles region.

In terms of assembly, interacts with the photosystem II subunit PsbO1 via its C-terminal region in the chloroplast thylakoid membrane and in CV-containing vesicles (CCVs). Mostly expressed in senescent and mature leaves but not in young leaves.

The protein resides in the plastid. The protein localises to the chloroplast membrane. It is found in the chloroplast thylakoid membrane. Its subcellular location is the chloroplast envelope. It localises to the vacuole. The protein resides in the vesicle. Triggers stress-induced chloroplast degradation, independently of autophagy and senescence-associated vacuoles. After targeting to the chloroplast, triggers its destabilization and subsequent disassembly, inducing the formation of CV-containing vesicles (CCVs) carrying stromal proteins, envelope membrane proteins, and thylakoid membrane proteins which are released from the chloroplasts and mobilized to the vacuole for proteolysis. The chain is Protein CHLOROPLAST VESICULATION from Arabidopsis thaliana (Mouse-ear cress).